Reading from the N-terminus, the 980-residue chain is Protein translocase subunit SecA (980 aa).

Residues Gln-109, 127–131 (GEGKT), and Asp-529 contribute to the ATP site. Positions 954–980 (QKIGRNDPCPCGSGKKYKHCHGKDNPQ) are disordered. Zn(2+) is bound by residues Cys-962, Cys-964, Cys-973, and His-974.

It belongs to the SecA family. Monomer and homodimer. Part of the essential Sec protein translocation apparatus which comprises SecA, SecYEG and auxiliary proteins SecDF. Other proteins may also be involved. The cofactor is Zn(2+).

The protein localises to the cell inner membrane. It is found in the cytoplasm. The enzyme catalyses ATP + H2O + cellular proteinSide 1 = ADP + phosphate + cellular proteinSide 2.. Part of the Sec protein translocase complex. Interacts with the SecYEG preprotein conducting channel. Has a central role in coupling the hydrolysis of ATP to the transfer of proteins into and across the cell membrane, serving as an ATP-driven molecular motor driving the stepwise translocation of polypeptide chains across the membrane. This is Protein translocase subunit SecA from Brachyspira hyodysenteriae (strain ATCC 49526 / WA1).